Reading from the N-terminus, the 146-residue chain is Ninjurin-1 (146 aa).

A disordered region spans residues 1–33 (MASEAMELNGGVNRRDDPGARPQQGRMSRNTPL). Topologically, residues 1–75 (MASEAMELNG…ELGPSFSFYI (75 aa)) are extracellular. The tract at residues 37 to 66 (HYANKKSAAESMLDIALLMANASQLKTVLE) is required to induce plasma membrane rupture. Positions 41–52 (KKSAAESMLDIA) are helix alpha1. Residues 55–71 (MANASQLKTVLELGPSF) are helix alpha2. Asn57 carries N-linked (GlcNAc...) asparagine glycosylation. A helical transmembrane segment spans residues 76–100 (PLITLISISLTLQIIVGILLIFIVK). Residues 101–110 (WNLNDSSKHY) are Cytoplasmic-facing. A helical membrane pass occupies residues 111–135 (ILNLLENIVTALVFIVVVVNVFITA). Topologically, residues 136 to 146 (FGVQRPDDKTS) are extracellular.

This sequence belongs to the ninjurin family. In terms of assembly, homooligomer; in response to death stimuli, homooligomerizes into long, highly branched filaments and large, ring-shaped structures in the membrane. Homodimer; in absence of death stimuli, forms an inactive homodimer. Homooligomer; in response to death stimuli, homooligomerizes into long, highly branched filaments and large, ring-shaped structures in the membrane.

The protein resides in the cell membrane. It is found in the synaptic cell membrane. With respect to regulation, in normal conditions, NINJ1 is inactivated. In response to death stimuli, homooligomerizes and disrupts membrane integrity by introducing the hydrophilic faces of alpha1 and alpha2 helices into the hydrophobic membrane. Homooligomerization and ability to mediate plasma membrane rupture is inhibited by glycine; it is unclear whether glycine directly or indirectly inhibits homooligomerization. In response to death stimuli, homooligomerizes and disrupts membrane integrity by introducing the hydrophilic faces of alpha1 and alpha2 helices into the hydrophobic membrane. Homooligomerization and ability to mediate plasma membrane rupture is inhibited by glycine; it is unclear whether glycine directly or indirectly inhibits homooligomerization. In normal conditions, NINJ1 is autoinhibited via formation of a homodimer: in the inactive homodimer, the alpha1 and alpha2 helices (residues 41-71) form a single transmembrane region without a kink, in which hydrophilic faces of alpha1 and alpha2 helices are sequestered. Its function is as follows. Effector of various programmed cell death, such as pyroptosis and necroptosis, which mediates plasma membrane rupture (cytolysis). Oligomerizes in response to death stimuli and forms ring-like structures on the plasma membrane: acts by cutting and shedding membrane disks, like a cookie cutter, leading to membrane damage and loss that cannot be repaired by the cell. Plasma membrane rupture leads to release intracellular molecules named damage-associated molecular patterns (DAMPs) that propagate the inflammatory response. Mechanistically, mediates plasma membrane rupture by introducing hydrophilic faces of 2 alpha helices into the hydrophobic membrane. Induces plasma membrane rupture downstream of Gasdermin (GSDMA, GSDMB, GSDMC, GSDMD, or GSDME) or MLKL during pyroptosis or necroptosis, respectively. Also acts as an effector of PANoptosis and ferroptosis. Induces plasma membrane rupture in response to cell swelling caused by osmotic stress. Acts as a regulator of Toll-like receptor 4 (TLR4) signaling triggered by lipopolysaccharide (LPS) during systemic inflammation; directly binds LPS. Involved in leukocyte migration during inflammation by promoting transendothelial migration of macrophages via homotypic binding. Promotes the migration of monocytes across the brain endothelium to central nervous system inflammatory lesions. Also acts as a homophilic transmembrane adhesion molecule involved in various processes such as axonal growth, cell chemotaxis and angiogenesis. Promotes cell adhesion by mediating homophilic interactions via its extracellular N-terminal adhesion motif (N-NAM). Also involved in striated muscle growth and differentiation. This is Ninjurin-1 from Danio rerio (Zebrafish).